The sequence spans 55 residues: Large ribosomal subunit protein bL33A (55 aa).

Belongs to the bacterial ribosomal protein bL33 family.

The protein is Large ribosomal subunit protein bL33A of Mycobacterium sp. (strain JLS).